The sequence spans 74 residues: Large ribosomal subunit protein uL30 (74 aa).

The protein belongs to the universal ribosomal protein uL30 family. As to quaternary structure, part of the 50S ribosomal subunit.

The sequence is that of Large ribosomal subunit protein uL30 from Micrococcus luteus (strain ATCC 4698 / DSM 20030 / JCM 1464 / CCM 169 / CCUG 5858 / IAM 1056 / NBRC 3333 / NCIMB 9278 / NCTC 2665 / VKM Ac-2230) (Micrococcus lysodeikticus).